The following is a 410-amino-acid chain: Dual-specificity RNA methyltransferase RlmN (410 aa).

Glutamate 123 serves as the catalytic Proton acceptor. Residues glutamate 129–leucine 378 enclose the Radical SAM core domain. An intrachain disulfide couples cysteine 136 to cysteine 381. Residues cysteine 143, cysteine 147, and cysteine 150 each coordinate [4Fe-4S] cluster. Residues glycine 207 to glutamate 208, serine 239, serine 261 to histidine 263, and asparagine 338 each bind S-adenosyl-L-methionine. The active-site S-methylcysteine intermediate is cysteine 381.

Belongs to the radical SAM superfamily. RlmN family. The cofactor is [4Fe-4S] cluster.

Its subcellular location is the cytoplasm. The enzyme catalyses adenosine(2503) in 23S rRNA + 2 reduced [2Fe-2S]-[ferredoxin] + 2 S-adenosyl-L-methionine = 2-methyladenosine(2503) in 23S rRNA + 5'-deoxyadenosine + L-methionine + 2 oxidized [2Fe-2S]-[ferredoxin] + S-adenosyl-L-homocysteine. It carries out the reaction adenosine(37) in tRNA + 2 reduced [2Fe-2S]-[ferredoxin] + 2 S-adenosyl-L-methionine = 2-methyladenosine(37) in tRNA + 5'-deoxyadenosine + L-methionine + 2 oxidized [2Fe-2S]-[ferredoxin] + S-adenosyl-L-homocysteine. Its function is as follows. Specifically methylates position 2 of adenine 2503 in 23S rRNA and position 2 of adenine 37 in tRNAs. m2A2503 modification seems to play a crucial role in the proofreading step occurring at the peptidyl transferase center and thus would serve to optimize ribosomal fidelity. This Mesorhizobium japonicum (strain LMG 29417 / CECT 9101 / MAFF 303099) (Mesorhizobium loti (strain MAFF 303099)) protein is Dual-specificity RNA methyltransferase RlmN.